The primary structure comprises 178 residues: Cytochrome b6-f complex iron-sulfur subunit (178 aa).

The chain crosses the membrane as a helical span at residues 20–42 (LLTFGTATGVALGALYPVANFFM). Positions 71–161 (NHPAGDRSLV…IDIDDDNVLV (91 aa)) constitute a Rieske domain. Cysteine 107, histidine 109, cysteine 125, and histidine 128 together coordinate [2Fe-2S] cluster. Cysteine 112 and cysteine 127 form a disulfide bridge.

It belongs to the Rieske iron-sulfur protein family. The 4 large subunits of the cytochrome b6-f complex are cytochrome b6, subunit IV (17 kDa polypeptide, PetD), cytochrome f and the Rieske protein, while the 4 small subunits are PetG, PetL, PetM and PetN. The complex functions as a dimer. [2Fe-2S] cluster serves as cofactor.

Its subcellular location is the cellular thylakoid membrane. The catalysed reaction is 2 oxidized [plastocyanin] + a plastoquinol + 2 H(+)(in) = 2 reduced [plastocyanin] + a plastoquinone + 4 H(+)(out). Functionally, component of the cytochrome b6-f complex, which mediates electron transfer between photosystem II (PSII) and photosystem I (PSI), cyclic electron flow around PSI, and state transitions. This is Cytochrome b6-f complex iron-sulfur subunit from Prochlorococcus marinus (strain SARG / CCMP1375 / SS120).